Here is a 304-residue protein sequence, read N- to C-terminus: Probable actin-related protein 2/3 complex subunit 2 (304 aa).

This sequence belongs to the ARPC2 family. Component of the Arp2/3 complex.

It is found in the cytoplasm. Its subcellular location is the cytoskeleton. Functionally, functions as actin-binding component of the Arp2/3 complex which is involved in regulation of actin polymerization and together with an activating nucleation-promoting factor (NPF) mediates the formation of branched actin networks. Seems to contact the mother actin filament. The chain is Probable actin-related protein 2/3 complex subunit 2 (Arc-p34) from Anopheles gambiae (African malaria mosquito).